A 191-amino-acid chain; its full sequence is UPF0149 protein VS_2635 (191 aa).

This sequence belongs to the UPF0149 family.

The chain is UPF0149 protein VS_2635 from Vibrio atlanticus (strain LGP32) (Vibrio splendidus (strain Mel32)).